Here is a 351-residue protein sequence, read N- to C-terminus: Ion-translocating oxidoreductase complex subunit D (351 aa).

Helical transmembrane passes span 18 to 38 (IMLL…YFFG), 42 to 62 (LIQV…VLHL), 87 to 107 (LPPL…IIIA), and 121 to 141 (PAMV…TSWL). At Thr185 the chain carries FMN phosphoryl threonine. A run of 5 helical transmembrane segments spans residues 212-232 (LAGI…LLLL), 241-261 (IPVS…MIAP), 264-284 (FAPP…FFIA), 298-318 (LIFG…GGYP), and 320-340 (GVAF…HYTQ).

The protein belongs to the NqrB/RnfD family. The complex is composed of six subunits: RnfA, RnfB, RnfC, RnfD, RnfE and RnfG. FMN is required as a cofactor.

It localises to the cell inner membrane. Part of a membrane-bound complex that couples electron transfer with translocation of ions across the membrane. This chain is Ion-translocating oxidoreductase complex subunit D, found in Yersinia enterocolitica serotype O:8 / biotype 1B (strain NCTC 13174 / 8081).